A 101-amino-acid polypeptide reads, in one-letter code: NAD(P)H-quinone oxidoreductase subunit 4L, chloroplastic (101 aa).

The next 3 helical transmembrane spans lie at 2-22 (MLEH…YGLI), 32-52 (MCLE…SDLF), and 61-81 (IFSI…PAIV).

This sequence belongs to the complex I subunit 4L family. As to quaternary structure, NDH is composed of at least 16 different subunits, 5 of which are encoded in the nucleus.

The protein localises to the plastid. It is found in the chloroplast thylakoid membrane. The enzyme catalyses a plastoquinone + NADH + (n+1) H(+)(in) = a plastoquinol + NAD(+) + n H(+)(out). It carries out the reaction a plastoquinone + NADPH + (n+1) H(+)(in) = a plastoquinol + NADP(+) + n H(+)(out). NDH shuttles electrons from NAD(P)H:plastoquinone, via FMN and iron-sulfur (Fe-S) centers, to quinones in the photosynthetic chain and possibly in a chloroplast respiratory chain. The immediate electron acceptor for the enzyme in this species is believed to be plastoquinone. Couples the redox reaction to proton translocation, and thus conserves the redox energy in a proton gradient. This chain is NAD(P)H-quinone oxidoreductase subunit 4L, chloroplastic, found in Illicium oligandrum (Star anise).